Consider the following 494-residue polypeptide: UDP-N-acetylmuramoyl-L-alanyl-D-glutamate--L-lysine ligase (494 aa).

A UDP-N-acetyl-alpha-D-muramoyl-L-alanyl-D-glutamate-binding site is contributed by S30. 110 to 116 contacts ATP; the sequence is GTNGKTS. UDP-N-acetyl-alpha-D-muramoyl-L-alanyl-D-glutamate contacts are provided by residues 152 to 153, S179, and R187; that span reads TT. At K219 the chain carries N6-carboxylysine. The short motif at 406-409 is the L-lysine recognition motif element; that stretch reads DNPA.

This sequence belongs to the MurCDEF family. MurE subfamily. Post-translationally, carboxylation is probably crucial for Mg(2+) binding and, consequently, for the gamma-phosphate positioning of ATP.

The protein resides in the cytoplasm. It catalyses the reaction UDP-N-acetyl-alpha-D-muramoyl-L-alanyl-D-glutamate + L-lysine + ATP = UDP-N-acetyl-alpha-D-muramoyl-L-alanyl-gamma-D-glutamyl-L-lysine + ADP + phosphate + H(+). It functions in the pathway cell wall biogenesis; peptidoglycan biosynthesis. Its function is as follows. Catalyzes the addition of L-lysine to the nucleotide precursor UDP-N-acetylmuramoyl-L-alanyl-D-glutamate (UMAG) in the biosynthesis of bacterial cell-wall peptidoglycan. The chain is UDP-N-acetylmuramoyl-L-alanyl-D-glutamate--L-lysine ligase from Staphylococcus aureus (strain bovine RF122 / ET3-1).